Here is a 427-residue protein sequence, read N- to C-terminus: WD repeat and SOCS box-containing protein 1 (427 aa).

WD repeat units follow at residues 129–170 (SRSI…LLLN), 173–213 (DHTD…NMVK), 217–256 (GHPN…LIRK), 259–298 (GHHN…ILLE), and 314–353 (ANDR…PQAV). One can recognise an SOCS box domain in the interval 379-427 (SVHFWECPRSIASLQHLCRMALRRVKTTQQVEALPVPMPLRDFLTYRVV).

Component of a probable ECS E3 ubiquitin-protein ligase complex that contains the Elongin BC complex.

It participates in protein modification; protein ubiquitination. In terms of biological role, probable substrate-recognition component of a SCF-like ECS (Elongin-Cullin-SOCS-box protein) E3 ubiquitin-protein ligase complex which mediates the ubiquitination and subsequent proteasomal degradation of target proteins. This is WD repeat and SOCS box-containing protein 1 (wsb1) from Takifugu rubripes (Japanese pufferfish).